Reading from the N-terminus, the 291-residue chain is Taste receptor type 2 member 16 (291 aa).

Residue Met-1 is a topological domain, extracellular. A helical membrane pass occupies residues 2 to 22; it reads IPIQLTVFFMIIYVLESLTII. Over 23–41 the chain is Cytoplasmic; the sequence is VQSSLIVAVLGREWLQVRR. Residues 42-62 form a helical membrane-spanning segment; it reads LMPVDMILISLGISRFCLQWA. At 63–84 the chain is on the extracellular side; it reads SMLNBFCSYFNLNYVLCNLTIT. N-linked (GlcNAc...) asparagine glycosylation occurs at Asn-80. The chain crosses the membrane as a helical span at residues 85–105; it reads WEFFNILTFWLNSLLTVFYCI. The Cytoplasmic portion of the chain corresponds to 106–125; that stretch reads KVSSFTHHIFLWLRWRILRL. The helical transmembrane segment at 126–146 threads the bilayer; it reads FPWILLGSLMITCVTIIPSAI. Residues 147 to 182 are Extracellular-facing; it reads GNYIQIQLLTMEHLPRNSTVTDKLEKFHQYEFQAHT. A glycan (N-linked (GlcNAc...) asparagine) is linked at Asn-163. A helical transmembrane segment spans residues 183 to 203; the sequence is VALVIPFILFLASTILLMASL. Topologically, residues 204-228 are cytoplasmic; the sequence is TKQIQHHSTGHCNPSMKAHFTALRS. The chain crosses the membrane as a helical span at residues 229 to 249; that stretch reads LAVLFIVFTSYFLTILITIIG. At 250-257 the chain is on the extracellular side; sequence TLFDRRCW. A helical transmembrane segment spans residues 258 to 278; it reads LWVWEAFVYAFILMHSTSLML. Topologically, residues 279–291 are cytoplasmic; the sequence is SSPTLKRILKGKC.

This sequence belongs to the G-protein coupled receptor T2R family. Interacts with RTP3 and RTP4.

It is found in the cell membrane. In terms of biological role, receptor that may play a role in the perception of bitterness and is gustducin-linked. May play a role in sensing the chemical composition of the gastrointestinal content. The activity of this receptor may stimulate alpha gustducin, mediate PLC-beta-2 activation and lead to the gating of TRPM5. This is Taste receptor type 2 member 16 (TAS2R16) from Gorilla gorilla gorilla (Western lowland gorilla).